We begin with the raw amino-acid sequence, 341 residues long: Hydrogenase expression/formation protein HupE (341 aa).

It belongs to the HypE family.

Functionally, may be involved in the maturation of the NifE hydrogenase. The sequence is that of Hydrogenase expression/formation protein HupE (hupE) from Azotobacter chroococcum mcd 1.